Reading from the N-terminus, the 116-residue chain is Large ribosomal subunit protein bL19 (116 aa).

Belongs to the bacterial ribosomal protein bL19 family.

Its function is as follows. This protein is located at the 30S-50S ribosomal subunit interface and may play a role in the structure and function of the aminoacyl-tRNA binding site. In Magnetococcus marinus (strain ATCC BAA-1437 / JCM 17883 / MC-1), this protein is Large ribosomal subunit protein bL19.